Reading from the N-terminus, the 167-residue chain is Shikimate kinase (167 aa).

Residue 8-15 (GFMGSGKT) participates in ATP binding.

It belongs to the shikimate kinase family.

The protein resides in the cytoplasm. The enzyme catalyses shikimate + ATP = 3-phosphoshikimate + ADP + H(+). It participates in metabolic intermediate biosynthesis; chorismate biosynthesis; chorismate from D-erythrose 4-phosphate and phosphoenolpyruvate: step 5/7. The sequence is that of Shikimate kinase from Helicobacter hepaticus (strain ATCC 51449 / 3B1).